A 186-amino-acid polypeptide reads, in one-letter code: Peptidyl-tRNA hydrolase (186 aa).

TRNA is bound at residue Y17. The active-site Proton acceptor is the H22. TRNA-binding residues include Y64 and N66.

It belongs to the PTH family. As to quaternary structure, monomer.

It is found in the cytoplasm. The catalysed reaction is an N-acyl-L-alpha-aminoacyl-tRNA + H2O = an N-acyl-L-amino acid + a tRNA + H(+). In terms of biological role, hydrolyzes ribosome-free peptidyl-tRNAs (with 1 or more amino acids incorporated), which drop off the ribosome during protein synthesis, or as a result of ribosome stalling. Its function is as follows. Catalyzes the release of premature peptidyl moieties from peptidyl-tRNA molecules trapped in stalled 50S ribosomal subunits, and thus maintains levels of free tRNAs and 50S ribosomes. This Methylacidiphilum infernorum (isolate V4) (Methylokorus infernorum (strain V4)) protein is Peptidyl-tRNA hydrolase.